The following is a 501-amino-acid chain: Glycerol kinase (501 aa).

Thr-16 is a binding site for ADP. Positions 16, 17, and 18 each coordinate ATP. A sn-glycerol 3-phosphate-binding site is contributed by Thr-16. Arg-20 serves as a coordination point for ADP. Sn-glycerol 3-phosphate is bound by residues Arg-84, Glu-85, Tyr-135, and Asp-242. 5 residues coordinate glycerol: Arg-84, Glu-85, Tyr-135, Asp-242, and Gln-243. 2 residues coordinate ADP: Thr-264 and Gly-307. ATP-binding residues include Thr-264, Gly-307, Gln-311, and Gly-408. ADP is bound at residue Gly-408.

This sequence belongs to the FGGY kinase family.

It catalyses the reaction glycerol + ATP = sn-glycerol 3-phosphate + ADP + H(+). It functions in the pathway polyol metabolism; glycerol degradation via glycerol kinase pathway; sn-glycerol 3-phosphate from glycerol: step 1/1. In terms of biological role, key enzyme in the regulation of glycerol uptake and metabolism. Catalyzes the phosphorylation of glycerol to yield sn-glycerol 3-phosphate. This Saccharolobus islandicus (strain M.16.27) (Sulfolobus islandicus) protein is Glycerol kinase.